The primary structure comprises 369 residues: MFCVTPPELETKMNITKGGLVLFSANSNSSCMELSKKIAERLGVEMGKVQVYQEPNRETRVQIQESVRGKDVFIIQTVSKDVNTTIMELLIMVYACKTSCAKSIIGVIPYFPYSKQCKMRKRGSIVSKLLASMMCKAGLTHLITMDLHQKEIQGFFNIPVDNLRASPFLLQYIQEEIPDYRNAVIVAKSPASAKRAQSFAERLRLGIAVIHGEAQDAESDLVDGRHSPPMVRSVAAIHPSLEIPMLIPKEKPPITVVGDVGGRIAIIVDDIIDDVDSFLAAAETLKERGAYKIFVMATHGLLSSDAPRRIEESAIDEVVVTNTIPHEVQKLQCPKIKTVDISMILSEAIRRIHNGESMSYLFRNIGLDD.

Met1 is modified (N-acetylmethionine). Thr5 carries the post-translational modification Phosphothreonine. Phosphoserine is present on residues Ser219, Ser227, and Ser233.

It belongs to the ribose-phosphate pyrophosphokinase family. In terms of assembly, binds to PRPS1 and PRPS2. Ubiquitous.

In terms of biological role, seems to play a negative regulatory role in 5-phosphoribose 1-diphosphate synthesis. The sequence is that of Phosphoribosyl pyrophosphate synthase-associated protein 2 (PRPSAP2) from Homo sapiens (Human).